A 396-amino-acid chain; its full sequence is MQNKLLFTSESVTEGHPDKICDQISDAVLDALLEQDPMSRVACETAITTGLVLVMGEITTSGYVDIQKIVRDTVKEIGYDRAKYGFDADTCGVIVALDEQSKDIALGVDKALEAKQNEMTDEAIEAIGAGDQGMMFGYASNETEELMPYPISLAHKLTKQLSKVRKDGTLSYLRPDGKSQVTVEYNEEGKPVHLNAVVLSTQHDPDVTQEQIHEDIKKYVFEPVLPKEMVDEKTKFFINPTGRFVIGGPNGDSGLTGRKIIVDTYGGYARHGGGAFSGKDCTKVDRSASYAARYVAKNIVASGLADKCEIQLSYAIGVAQPTSIMIDTFGTGKKSNEELTEIVRKHFDLRPAGIIKMLDLRRPIYKQTAAYGHFGRNDLNLPWEQTDKAEELKKYL.

His16 lines the ATP pocket. Asp18 lines the Mg(2+) pocket. Glu44 lines the K(+) pocket. L-methionine contacts are provided by Glu57 and Gln100. A flexible loop region spans residues Gln100 to Lys110. Residues Asp176–Lys178, Arg243–Phe244, Asp252, Arg258–Lys259, Ala275, and Lys279 contribute to the ATP site. Asp252 serves as a coordination point for L-methionine. An L-methionine-binding site is contributed by Lys283.

Belongs to the AdoMet synthase family. Homotetramer; dimer of dimers. Mg(2+) serves as cofactor. K(+) is required as a cofactor.

It is found in the cytoplasm. It catalyses the reaction L-methionine + ATP + H2O = S-adenosyl-L-methionine + phosphate + diphosphate. It functions in the pathway amino-acid biosynthesis; S-adenosyl-L-methionine biosynthesis; S-adenosyl-L-methionine from L-methionine: step 1/1. Functionally, catalyzes the formation of S-adenosylmethionine (AdoMet) from methionine and ATP. The overall synthetic reaction is composed of two sequential steps, AdoMet formation and the subsequent tripolyphosphate hydrolysis which occurs prior to release of AdoMet from the enzyme. The sequence is that of S-adenosylmethionine synthase from Lachnoclostridium phytofermentans (strain ATCC 700394 / DSM 18823 / ISDg) (Clostridium phytofermentans).